The chain runs to 118 residues: Large ribosomal subunit protein bL19 (118 aa).

Belongs to the bacterial ribosomal protein bL19 family.

This protein is located at the 30S-50S ribosomal subunit interface and may play a role in the structure and function of the aminoacyl-tRNA binding site. The sequence is that of Large ribosomal subunit protein bL19 from Hahella chejuensis (strain KCTC 2396).